Reading from the N-terminus, the 489-residue chain is Siroheme synthase (489 aa).

Residues 1-203 (MDFFPVFMRL…GREDAARETL (203 aa)) are precorrin-2 dehydrogenase /sirohydrochlorin ferrochelatase. NAD(+) contacts are provided by residues 22–23 (PV) and 43–44 (PA). The segment at 218 to 489 (GEVFLVGAGP…ARSSTEGAEA (272 aa)) is uroporphyrinogen-III C-methyltransferase. An S-adenosyl-L-methionine-binding site is contributed by Pro-227. Catalysis depends on Asp-250, which acts as the Proton acceptor. Lys-272 acts as the Proton donor in catalysis. Residues 303-305 (GGD), Ile-308, 333-334 (TA), Met-385, and Gly-414 each bind S-adenosyl-L-methionine.

This sequence in the N-terminal section; belongs to the precorrin-2 dehydrogenase / sirohydrochlorin ferrochelatase family. It in the C-terminal section; belongs to the precorrin methyltransferase family.

It carries out the reaction uroporphyrinogen III + 2 S-adenosyl-L-methionine = precorrin-2 + 2 S-adenosyl-L-homocysteine + H(+). The catalysed reaction is precorrin-2 + NAD(+) = sirohydrochlorin + NADH + 2 H(+). The enzyme catalyses siroheme + 2 H(+) = sirohydrochlorin + Fe(2+). It functions in the pathway cofactor biosynthesis; adenosylcobalamin biosynthesis; precorrin-2 from uroporphyrinogen III: step 1/1. Its pathway is cofactor biosynthesis; adenosylcobalamin biosynthesis; sirohydrochlorin from precorrin-2: step 1/1. It participates in porphyrin-containing compound metabolism; siroheme biosynthesis; precorrin-2 from uroporphyrinogen III: step 1/1. The protein operates within porphyrin-containing compound metabolism; siroheme biosynthesis; siroheme from sirohydrochlorin: step 1/1. It functions in the pathway porphyrin-containing compound metabolism; siroheme biosynthesis; sirohydrochlorin from precorrin-2: step 1/1. Multifunctional enzyme that catalyzes the SAM-dependent methylations of uroporphyrinogen III at position C-2 and C-7 to form precorrin-2 via precorrin-1. Then it catalyzes the NAD-dependent ring dehydrogenation of precorrin-2 to yield sirohydrochlorin. Finally, it catalyzes the ferrochelation of sirohydrochlorin to yield siroheme. This Thioalkalivibrio sulfidiphilus (strain HL-EbGR7) protein is Siroheme synthase.